We begin with the raw amino-acid sequence, 983 residues long: Probable beta-galactosidase C (983 aa).

Positions 1-23 (MRIFSFLFLLLLGILTGQGLVSG) are cleaved as a signal peptide. 5 residues coordinate substrate: tyrosine 82, asparagine 127, alanine 128, glutamate 129, and asparagine 187. Residue glutamate 188 is the Proton donor of the active site. An N-linked (GlcNAc...) asparagine glycan is attached at asparagine 197. Substrate is bound at residue tyrosine 251. A disulfide bond links cysteine 257 and cysteine 304. An N-linked (GlcNAc...) asparagine glycan is attached at asparagine 276. The active-site Nucleophile is glutamate 287. Tyrosine 353 is a substrate binding site. N-linked (GlcNAc...) asparagine glycans are attached at residues asparagine 391, asparagine 434, asparagine 466, asparagine 516, asparagine 601, asparagine 676, asparagine 714, asparagine 719, and asparagine 804.

Belongs to the glycosyl hydrolase 35 family.

It localises to the secreted. It carries out the reaction Hydrolysis of terminal non-reducing beta-D-galactose residues in beta-D-galactosides.. Its function is as follows. Cleaves beta-linked terminal galactosyl residues from gangliosides, glycoproteins, and glycosaminoglycans. This chain is Probable beta-galactosidase C (lacC), found in Neosartorya fischeri (strain ATCC 1020 / DSM 3700 / CBS 544.65 / FGSC A1164 / JCM 1740 / NRRL 181 / WB 181) (Aspergillus fischerianus).